A 175-amino-acid chain; its full sequence is ATP-dependent protease subunit HslV (175 aa).

Residue T2 is part of the active site. The Na(+) site is built by G158, C161, and T164.

It belongs to the peptidase T1B family. HslV subfamily. In terms of assembly, a double ring-shaped homohexamer of HslV is capped on each side by a ring-shaped HslU homohexamer. The assembly of the HslU/HslV complex is dependent on binding of ATP.

It is found in the cytoplasm. It catalyses the reaction ATP-dependent cleavage of peptide bonds with broad specificity.. Its activity is regulated as follows. Allosterically activated by HslU binding. In terms of biological role, protease subunit of a proteasome-like degradation complex believed to be a general protein degrading machinery. This is ATP-dependent protease subunit HslV from Haemophilus influenzae (strain PittGG).